A 356-amino-acid polypeptide reads, in one-letter code: Thymidine kinase (356 aa).

The segment at 1–29 is disordered; that stretch reads MMDSRATYVPPKKISESNSNAEEDPTDCS. ATP is bound at residue 61–68; the sequence is GCVGVGKT. Glu-86 serves as the catalytic Proton acceptor. A substrate-binding site is contributed by Gln-122. ATP is bound at residue Arg-208. Arg-214 is a binding site for substrate.

The protein belongs to the herpesviridae thymidine kinase family. As to quaternary structure, homodimer.

It carries out the reaction thymidine + ATP = dTMP + ADP + H(+). In terms of biological role, catalyzes the transfer of the gamma-phospho group of ATP to thymidine to generate dTMP in the salvage pathway of pyrimidine synthesis. The dTMP serves as a substrate for DNA polymerase during viral DNA replication. Allows the virus to be reactivated and to grow in non-proliferative cells lacking a high concentration of phosphorylated nucleic acid precursors. The chain is Thymidine kinase from Elephas maximus (Indian elephant).